We begin with the raw amino-acid sequence, 416 residues long: Serine hydroxymethyltransferase (416 aa).

Residues leucine 121 and 125–127 each bind (6S)-5,6,7,8-tetrahydrofolate; that span reads GHL. N6-(pyridoxal phosphate)lysine is present on lysine 229. A (6S)-5,6,7,8-tetrahydrofolate-binding site is contributed by 354-356; that stretch reads SPF.

The protein belongs to the SHMT family. In terms of assembly, homodimer. It depends on pyridoxal 5'-phosphate as a cofactor.

Its subcellular location is the cytoplasm. The catalysed reaction is (6R)-5,10-methylene-5,6,7,8-tetrahydrofolate + glycine + H2O = (6S)-5,6,7,8-tetrahydrofolate + L-serine. It participates in one-carbon metabolism; tetrahydrofolate interconversion. It functions in the pathway amino-acid biosynthesis; glycine biosynthesis; glycine from L-serine: step 1/1. Catalyzes the reversible interconversion of serine and glycine with tetrahydrofolate (THF) serving as the one-carbon carrier. This reaction serves as the major source of one-carbon groups required for the biosynthesis of purines, thymidylate, methionine, and other important biomolecules. Also exhibits THF-independent aldolase activity toward beta-hydroxyamino acids, producing glycine and aldehydes, via a retro-aldol mechanism. This is Serine hydroxymethyltransferase from Halorhodospira halophila (strain DSM 244 / SL1) (Ectothiorhodospira halophila (strain DSM 244 / SL1)).